The primary structure comprises 419 residues: Arginine biosynthesis bifunctional protein ArgJ 1, mitochondrial (419 aa).

Substrate contacts are provided by Lys177, Thr188, Glu275, Asn414, and Thr419. The Nucleophile role is filled by Thr188.

It belongs to the ArgJ family. As to quaternary structure, heterodimer of an alpha and a beta chain. The alpha and beta chains are autoproteolytically processed from a single precursor protein within the mitochondrion.

The protein resides in the mitochondrion matrix. The enzyme catalyses N(2)-acetyl-L-ornithine + L-glutamate = N-acetyl-L-glutamate + L-ornithine. It catalyses the reaction L-glutamate + acetyl-CoA = N-acetyl-L-glutamate + CoA + H(+). It functions in the pathway amino-acid biosynthesis; L-arginine biosynthesis; L-ornithine and N-acetyl-L-glutamate from L-glutamate and N(2)-acetyl-L-ornithine (cyclic): step 1/1. The protein operates within amino-acid biosynthesis; L-arginine biosynthesis; N(2)-acetyl-L-ornithine from L-glutamate: step 1/4. In terms of biological role, catalyzes two activities which are involved in the cyclic version of arginine biosynthesis: the synthesis of acetylglutamate from glutamate and acetyl-CoA, and of ornithine by transacetylation between acetylornithine and glutamate. This chain is Arginine biosynthesis bifunctional protein ArgJ 1, mitochondrial, found in Sclerotinia sclerotiorum (strain ATCC 18683 / 1980 / Ss-1) (White mold).